Here is a 403-residue protein sequence, read N- to C-terminus: TPR repeat-containing protein Synpcc7942_0270 (403 aa).

TPR repeat units lie at residues 208–243 (AYLC…PEPA), 244–282 (VRYE…AIHK), 283–316 (LGAW…APQA), 317–350 (TVAL…DPND), and 351–387 (PSLY…QGSP).

This Synechococcus elongatus (strain ATCC 33912 / PCC 7942 / FACHB-805) (Anacystis nidulans R2) protein is TPR repeat-containing protein Synpcc7942_0270.